The primary structure comprises 314 residues: MPFGQPGFLWRVPDAHIAMRGLVMAPLLILLVGGTEAFRICAFNAHRLTLAKLTKESVMDTLVQILARCDIMVLQEVVDSSQNTVPFLLQKLKSSRSYSFLNSSLLGRSTYKEKYVYIYRSDKTQVLNFYQYNDTDDIFAREPFVAHFTLPSKTLPSVVLVPLHTTPKDVEKELNALYDVFLDVYQRWQNENVILLGDFNADCASLTKKRLKSLLLRTKAGFHWVIPDGEDTTVRASTNCTYDRIVVHGQGCQMLLKAAATFDFPKRFQLTEEEALRISDHYPVEVELSQATPLSIPPHYLAALLLSLLPSQLD.

A signal peptide spans 1 to 37; the sequence is MPFGQPGFLWRVPDAHIAMRGLVMAPLLILLVGGTEA. N102 is a glycosylation site (N-linked (GlcNAc...) asparagine). Residue E113 is part of the active site. N133 carries N-linked (GlcNAc...) asparagine glycosylation. H164 is an active-site residue. Residues C203 and C240 are joined by a disulfide bond. Residue N239 is glycosylated (N-linked (GlcNAc...) asparagine).

It belongs to the DNase I family. Highly expressed in heart and skeletal muscles. Low expression in brain and thymus. Intermediated expression in other tissues.

The protein resides in the endoplasmic reticulum. The chain is Deoxyribonuclease-1-like 1 (Dnase1l1) from Mus musculus (Mouse).